The sequence spans 325 residues: Phosphate acyltransferase (325 aa).

The protein belongs to the PlsX family. In terms of assembly, homodimer. Probably interacts with PlsY.

The protein resides in the cytoplasm. It catalyses the reaction a fatty acyl-[ACP] + phosphate = an acyl phosphate + holo-[ACP]. It functions in the pathway lipid metabolism; phospholipid metabolism. In terms of biological role, catalyzes the reversible formation of acyl-phosphate (acyl-PO(4)) from acyl-[acyl-carrier-protein] (acyl-ACP). This enzyme utilizes acyl-ACP as fatty acyl donor, but not acyl-CoA. This is Phosphate acyltransferase from Mycoplasmopsis pulmonis (strain UAB CTIP) (Mycoplasma pulmonis).